We begin with the raw amino-acid sequence, 525 residues long: GMP synthase [glutamine-hydrolyzing] (525 aa).

In terms of domain architecture, Glutamine amidotransferase type-1 spans 9 to 207 (RILILDFGSQ…VRDICQCEAL (199 aa)). Cys86 functions as the Nucleophile in the catalytic mechanism. Residues His181 and Glu183 contribute to the active site. The GMPS ATP-PPase domain maps to 208-400 (WTPAKIIDDA…LGLPYDMLYR (193 aa)). An ATP-binding site is contributed by 235-241 (SGGVDSS).

In terms of assembly, homodimer.

The enzyme catalyses XMP + L-glutamine + ATP + H2O = GMP + L-glutamate + AMP + diphosphate + 2 H(+). Its pathway is purine metabolism; GMP biosynthesis; GMP from XMP (L-Gln route): step 1/1. Catalyzes the synthesis of GMP from XMP. This chain is GMP synthase [glutamine-hydrolyzing], found in Escherichia coli O17:K52:H18 (strain UMN026 / ExPEC).